The following is a 213-amino-acid chain: Large ribosomal subunit protein uL18c (213 aa).

This sequence belongs to the universal ribosomal protein uL18 family.

The protein resides in the plastid. It localises to the apicoplast. The chain is Large ribosomal subunit protein uL18c (RPL18) from Plasmodium falciparum (isolate 3D7).